The chain runs to 106 residues: ATP-dependent Clp protease adapter protein ClpS (106 aa).

This sequence belongs to the ClpS family. Binds to the N-terminal domain of the chaperone ClpA.

Involved in the modulation of the specificity of the ClpAP-mediated ATP-dependent protein degradation. The sequence is that of ATP-dependent Clp protease adapter protein ClpS from Pseudoalteromonas atlantica (strain T6c / ATCC BAA-1087).